The sequence spans 336 residues: MGGGLVLPTRDPPKEQDTSETATNIPKLLKSIPGVKLGQQIRIGYKPGPETAKAFPEFDIKEVSNGLYELSRKSYLGDTKTCCINPSLSYYWEDSKNKIFDEYATGRSLKTCDPLTKTISGSTLCDNILTSLCLDEKSGVDRTMCNEWMGYALNRPDLSIPKSINDRYTKLCSKGANNIVCEDWLHHLRIIGGKENDEVIDNVLMQQTPEFKEKYMKCSFPSHNTVFLADRVIEPRECWDQECITSNVHFLLSKNYHNLTLCHIYRCNISINNLLIDGKSSVKISCHDENISNKDKPKARNKAKFIDDILGSSFNINFGFFFVIFIMIALILIVLL.

Residues 1-22 are disordered; the sequence is MGGGLVLPTRDPPKEQDTSETA.

It belongs to the poxviruses A16/G9/J5 family.

The sequence is that of Protein FPV127 from Vertebrata (FPV).